We begin with the raw amino-acid sequence, 43 residues long: Potassium channel toxin gamma-KTx 4.8 (43 aa).

4 cysteine pairs are disulfide-bonded: Cys-5–Cys-23, Cys-11–Cys-34, Cys-20–Cys-39, and Cys-24–Cys-41.

This sequence belongs to the ergtoxin family. Gamma-KTx 4 subfamily. Expressed by the venom gland.

The protein resides in the secreted. In terms of biological role, reversibly blocks Kv11/ERG potassium channels. The polypeptide is Potassium channel toxin gamma-KTx 4.8 (Centruroides elegans (Bark scorpion)).